A 62-amino-acid chain; its full sequence is Sperm protamine P1 (62 aa).

Residues 1 to 62 (MARYRRHSRS…RYSRRGRRRY (62 aa)) are disordered.

It belongs to the protamine P1 family. In terms of tissue distribution, testis.

The protein localises to the nucleus. It is found in the chromosome. Protamines substitute for histones in the chromatin of sperm during the haploid phase of spermatogenesis. They compact sperm DNA into a highly condensed, stable and inactive complex. The protein is Sperm protamine P1 (PRM1) of Antechinomys laniger (Eastern jerboa marsupial).